The sequence spans 284 residues: NH(3)-dependent NAD(+) synthetase (284 aa).

51–58 is an ATP binding site; the sequence is GISGGIDS. Aspartate 57 serves as a coordination point for Mg(2+). Residue arginine 148 participates in deamido-NAD(+) binding. An ATP-binding site is contributed by threonine 168. Residue glutamate 173 participates in Mg(2+) binding. Deamido-NAD(+)-binding residues include lysine 181 and aspartate 188. ATP is bound by residues lysine 197 and threonine 219. 268–269 contacts deamido-NAD(+); that stretch reads HK.

The protein belongs to the NAD synthetase family. Homodimer.

The catalysed reaction is deamido-NAD(+) + NH4(+) + ATP = AMP + diphosphate + NAD(+) + H(+). Its pathway is cofactor biosynthesis; NAD(+) biosynthesis; NAD(+) from deamido-NAD(+) (ammonia route): step 1/1. Its function is as follows. Catalyzes the ATP-dependent amidation of deamido-NAD to form NAD. Uses ammonia as a nitrogen source. The protein is NH(3)-dependent NAD(+) synthetase of Burkholderia mallei (strain NCTC 10247).